Reading from the N-terminus, the 388-residue chain is Succinate--CoA ligase [ADP-forming] subunit beta (388 aa).

One can recognise an ATP-grasp domain in the interval 9–244 (KQLFARYGLP…QSQEDPREAQ (236 aa)). ATP contacts are provided by residues Lys-46, 53 to 55 (GRG), Glu-99, Thr-102, and Glu-107. Residues Asn-199 and Asp-213 each coordinate Mg(2+). Substrate contacts are provided by residues Asn-264 and 321 to 323 (GIV).

This sequence belongs to the succinate/malate CoA ligase beta subunit family. In terms of assembly, heterotetramer of two alpha and two beta subunits. Requires Mg(2+) as cofactor.

The catalysed reaction is succinate + ATP + CoA = succinyl-CoA + ADP + phosphate. It catalyses the reaction GTP + succinate + CoA = succinyl-CoA + GDP + phosphate. It participates in carbohydrate metabolism; tricarboxylic acid cycle; succinate from succinyl-CoA (ligase route): step 1/1. Its function is as follows. Succinyl-CoA synthetase functions in the citric acid cycle (TCA), coupling the hydrolysis of succinyl-CoA to the synthesis of either ATP or GTP and thus represents the only step of substrate-level phosphorylation in the TCA. The beta subunit provides nucleotide specificity of the enzyme and binds the substrate succinate, while the binding sites for coenzyme A and phosphate are found in the alpha subunit. This chain is Succinate--CoA ligase [ADP-forming] subunit beta, found in Salmonella arizonae (strain ATCC BAA-731 / CDC346-86 / RSK2980).